A 457-amino-acid polypeptide reads, in one-letter code: Hepatocyte nuclear factor 3-beta (457 aa).

The transactivation domain 1 stretch occupies residues 14-93; the sequence is DWSSYYAEPE…AGAMAGMGGS (80 aa). The Nuclear localization signal motif lies at 106-113; sequence LSPSLSPL. The residue at position 156 (T156) is a Phosphothreonine. The segment at residues 159-252 is a DNA-binding region (fork-head); it reads KPPYSYISLI…FENGCYLRRQ (94 aa). S212 and S283 each carry phosphoserine. Residues 280–292 show a composition bias toward low complexity; the sequence is AQASQAQLGEAAG. A disordered region spans residues 280–365; the sequence is AQASQAQLGE…PGLPPEAHLK (86 aa). Residues 298–310 are compositionally biased toward polar residues; it reads PAGTESPHSSASP. Position 301 is a phosphothreonine (T301). Residues S303, S306, S307, and S309 each carry the phosphoserine modification. The segment covering 339–352 has biased composition (low complexity); the sequence is PGQQQQAAAHLLGP. The tract at residues 361–457 is transactivation domain 2; the sequence is EAHLKPEHHY…VYSRPIMNSS (97 aa). Residues S436 and S457 each carry the phosphoserine modification.

In terms of assembly, binds DNA as a monomer. Binds TLE1. Interacts with FOXA1 and FOXA3. Interacts with PRKDC. Interacts with AKT1. Interacts with TET1; this interaction may recruit TET1 to specific genomic loci to mediate their demethylation. In terms of processing, phosphorylation on Thr-156 abolishes binding to target promoters and subsequent transcription activation upon insulin stimulation.

The protein resides in the nucleus. The protein localises to the cytoplasm. Its function is as follows. Transcription factor that is involved in embryonic development, establishment of tissue-specific gene expression and regulation of gene expression in differentiated tissues. Is thought to act as a 'pioneer' factor opening the compacted chromatin for other proteins through interactions with nucleosomal core histones and thereby replacing linker histones at target enhancer and/or promoter sites. Binds DNA with the consensus sequence 5'-[AC]A[AT]T[AG]TT[GT][AG][CT]T[CT]-3'. In embryonic development is required for notochord formation. Involved in the development of multiple endoderm-derived organ systems such as the liver, pancreas and lungs; FOXA1 and FOXA2 seem to have at least in part redundant roles. Originally described as a transcription activator for a number of liver genes such as AFP, albumin, tyrosine aminotransferase, PEPCK, etc. Interacts with the cis-acting regulatory regions of these genes. Involved in glucose homeostasis; regulates the expression of genes important for glucose sensing in pancreatic beta-cells and glucose homeostasis. Involved in regulation of fat metabolism. Binds to fibrinogen beta promoter and is involved in IL6-induced fibrinogen beta transcriptional activation. In Homo sapiens (Human), this protein is Hepatocyte nuclear factor 3-beta (FOXA2).